Here is a 319-residue protein sequence, read N- to C-terminus: MNKVNILPSDTNIKITLFSEVSVGISANSVLFFAHLCMFFEENRSKPIDLCIAFLSLTQLMLLVTMGLIAADMFMSQGIWDSTTCRSIIYFHRLLRGFNLCAACLLHILWTFTLSPRSSCLTKFKHKSPHHISCAFFSLCVLYMLFSSHLFVLIIATSNLTSDHFMYVTQSCSILPMSYSRTTMFSLVMVTREAFLISLMALFSGYMVTLLWRHKKQVQHLHSTSLSSKSSPQQRATRTILLLMSFFVVLYILDIVIFQSRTKFKDGSMFYSLHIIVSHSYATISPFVFIFSDKRIIKFLGSMSGRIINICLFSDGYGP.

At 1-19 (MNKVNILPSDTNIKITLFS) the chain is on the extracellular side. The helical transmembrane segment at 20-40 (EVSVGISANSVLFFAHLCMFF) threads the bilayer. Topologically, residues 41 to 49 (EENRSKPID) are cytoplasmic. Residues 50 to 70 (LCIAFLSLTQLMLLVTMGLIA) form a helical membrane-spanning segment. Residues 71–93 (ADMFMSQGIWDSTTCRSIIYFHR) are Extracellular-facing. A disulfide bridge links cysteine 85 with cysteine 172. A helical transmembrane segment spans residues 94-114 (LLRGFNLCAACLLHILWTFTL). The Cytoplasmic segment spans residues 115–134 (SPRSSCLTKFKHKSPHHISC). A helical transmembrane segment spans residues 135–155 (AFFSLCVLYMLFSSHLFVLII). Residues 156–193 (ATSNLTSDHFMYVTQSCSILPMSYSRTTMFSLVMVTRE) are Extracellular-facing. Asparagine 159 carries an N-linked (GlcNAc...) asparagine glycan. Residues 194–214 (AFLISLMALFSGYMVTLLWRH) traverse the membrane as a helical segment. Residues 215–238 (KKQVQHLHSTSLSSKSSPQQRATR) are Cytoplasmic-facing. The helical transmembrane segment at 239-259 (TILLLMSFFVVLYILDIVIFQ) threads the bilayer. Topologically, residues 260 to 269 (SRTKFKDGSM) are extracellular. The chain crosses the membrane as a helical span at residues 270–290 (FYSLHIIVSHSYATISPFVFI). The Cytoplasmic segment spans residues 291–319 (FSDKRIIKFLGSMSGRIINICLFSDGYGP).

This sequence belongs to the G-protein coupled receptor 1 family.

Its subcellular location is the cell membrane. In terms of biological role, putative pheromone receptor implicated in the regulation of social as well as reproductive behavior. This Rattus norvegicus (Rat) protein is Vomeronasal type-1 receptor 96 (Vom1r96).